A 362-amino-acid chain; its full sequence is MENQVLTPHVYWAQRHHELYLRVELSDVQNPAISITENVLHFKAQGHGAKGDNVYEFHLEFLDLVKPEPVYKLTQRQVNITVQKKESQWWERLTKQEKRPLFLAPDFDRWLDESDAEMELRAKEEEQLNKLRLESQGSPETLTSLKKGYLFMYNLVQFLGFSWIFVNMTVRFFILGKESFYDTFHTVADMMYFCQMLAAVESINAAIGVTKSPVVPSLFQLLGRNFILFIIFGTMEEMQNKAVVFFVFYIWSTVEIFRYPFYMLSCIDMDWKVLTWLRYTVWIPLYPMGCLAEAVSVIQSIPVFNETGRFSFTLPYPVKIKVRFSFFLQIYLILLFLGLYVNFRYLYKQRRRRFGQKKKKIH.

Methionine 1 carries the N-acetylmethionine modification. Residues 1 to 149 (MENQVLTPHV…ETLTSLKKGY (149 aa)) are Cytoplasmic-facing. Residues 5-94 (VLTPHVYWAQ…KESQWWERLT (90 aa)) form the CS domain. Threonine 7 carries the post-translational modification Phosphothreonine. Residues 111–136 (LDESDAEMELRAKEEEQLNKLRLESQ) are a coiled coil. 2 positions are modified to phosphoserine: serine 114 and serine 135. A helical membrane pass occupies residues 150–170 (LFMYNLVQFLGFSWIFVNMTV). The Lumenal portion of the chain corresponds to 171-189 (RFFILGKESFYDTFHTVAD). Residues 190 to 210 (MMYFCQMLAAVESINAAIGVT) traverse the membrane as a helical segment. Topologically, residues 211–212 (KS) are cytoplasmic. A helical transmembrane segment spans residues 213-233 (PVVPSLFQLLGRNFILFIIFG). Residues 234–242 (TMEEMQNKA) lie on the Lumenal side of the membrane. Residues 243 to 263 (VVFFVFYIWSTVEIFRYPFYM) form a helical membrane-spanning segment. At 264–280 (LSCIDMDWKVLTWLRYT) the chain is on the cytoplasmic side. A helical transmembrane segment spans residues 281–301 (VWIPLYPMGCLAEAVSVIQSI). Catalysis depends on residues tyrosine 286 and glutamate 293. Residues 302–325 (PVFNETGRFSFTLPYPVKIKVRFS) lie on the Lumenal side of the membrane. The helical transmembrane segment at 326–346 (FFLQIYLILLFLGLYVNFRYL) threads the bilayer. At 347–362 (YKQRRRRFGQKKKKIH) the chain is on the cytoplasmic side.

This sequence belongs to the very long-chain fatty acids dehydratase HACD family. As to quaternary structure, may interact with enzymes of the ELO family (including ELOVL1); with those enzymes that mediate condensation, the first of the four steps of the reaction cycle responsible for fatty acids elongation, may be part of a larger fatty acids elongase complex. Interacts with RAC1. Associates with internalized insulin receptor/INSR complexes on Golgi/endosomal membranes; HACD3/PTPLAD1 together with ATIC and PRKAA2/AMPK2 is proposed to be part of a signaling network regulating INSR autophosphorylation and endocytosis.

It localises to the endoplasmic reticulum membrane. The enzyme catalyses a very-long-chain (3R)-3-hydroxyacyl-CoA = a very-long-chain (2E)-enoyl-CoA + H2O. The catalysed reaction is (3R)-hydroxyhexadecanoyl-CoA = (2E)-hexadecenoyl-CoA + H2O. The protein operates within lipid metabolism; fatty acid biosynthesis. In terms of biological role, catalyzes the third of the four reactions of the long-chain fatty acids elongation cycle. This endoplasmic reticulum-bound enzymatic process, allows the addition of two carbons to the chain of long- and very long-chain fatty acids/VLCFAs per cycle. This enzyme catalyzes the dehydration of the 3-hydroxyacyl-CoA intermediate into trans-2,3-enoyl-CoA, within each cycle of fatty acid elongation. Thereby, it participates in the production of VLCFAs of different chain lengths that are involved in multiple biological processes as precursors of membrane lipids and lipid mediators. Involved in Rac1-signaling pathways leading to the modulation of gene expression. Promotes insulin receptor/INSR autophosphorylation and is involved in INSR internalization. The chain is Very-long-chain (3R)-3-hydroxyacyl-CoA dehydratase 3 from Bos taurus (Bovine).